We begin with the raw amino-acid sequence, 233 residues long: Leucyl/phenylalanyl-tRNA--protein transferase (233 aa).

The protein belongs to the L/F-transferase family.

The protein resides in the cytoplasm. The enzyme catalyses N-terminal L-lysyl-[protein] + L-leucyl-tRNA(Leu) = N-terminal L-leucyl-L-lysyl-[protein] + tRNA(Leu) + H(+). The catalysed reaction is N-terminal L-arginyl-[protein] + L-leucyl-tRNA(Leu) = N-terminal L-leucyl-L-arginyl-[protein] + tRNA(Leu) + H(+). It carries out the reaction L-phenylalanyl-tRNA(Phe) + an N-terminal L-alpha-aminoacyl-[protein] = an N-terminal L-phenylalanyl-L-alpha-aminoacyl-[protein] + tRNA(Phe). Functionally, functions in the N-end rule pathway of protein degradation where it conjugates Leu, Phe and, less efficiently, Met from aminoacyl-tRNAs to the N-termini of proteins containing an N-terminal arginine or lysine. The sequence is that of Leucyl/phenylalanyl-tRNA--protein transferase from Chromobacterium violaceum (strain ATCC 12472 / DSM 30191 / JCM 1249 / CCUG 213 / NBRC 12614 / NCIMB 9131 / NCTC 9757 / MK).